A 264-amino-acid chain; its full sequence is Undecaprenyl-diphosphatase (264 aa).

8 helical membrane-spanning segments follow: residues 1 to 21, 40 to 60, 81 to 101, 109 to 129, 140 to 160, 183 to 203, 211 to 231, and 239 to 259; these read MTVFQALVLGIIQGLGEFLPI, GLTFDVALHLGTLISIAAFFW, MFWYLVLATVPGAVMGYLLEE, TPLLIGIMLIVMGIFLYWADA, ISMADSLLIGLSQAFAIIPGV, FSFLLSTPIIVGAGLFKLKDI, AFITGVASSALVGFISISFLL, and FALFVWYRLVAGLAVIVLAAA.

The protein belongs to the UppP family.

It is found in the cell membrane. The enzyme catalyses di-trans,octa-cis-undecaprenyl diphosphate + H2O = di-trans,octa-cis-undecaprenyl phosphate + phosphate + H(+). Catalyzes the dephosphorylation of undecaprenyl diphosphate (UPP). Confers resistance to bacitracin. The sequence is that of Undecaprenyl-diphosphatase from Pelotomaculum thermopropionicum (strain DSM 13744 / JCM 10971 / SI).